The following is a 727-amino-acid chain: Endothelin-converting enzyme homolog (727 aa).

Residues 1–44 (MSFNFSRYSGAYTTTFSFLLLALLIVSAVLLSRPYAPALLHAEE) are Cytoplasmic-facing. A helical; Signal-anchor for type II membrane protein membrane pass occupies residues 45 to 65 (AYCVSMSCVTAAASVLSLMDA). One can recognise a Peptidase M13 domain in the interval 46-727 (YCVSMSCVTA…MNPVHKCEVW (682 aa)). Disulfide bonds link Cys47-Cys52, Cys70-Cys712, Cys78-Cys672, Cys134-Cys392, and Cys601-Cys724. The Extracellular segment spans residues 66–727 (TADPCSDFYQ…MNPVHKCEVW (662 aa)). 9 N-linked (GlcNAc...) asparagine glycosylation sites follow: Asn138, Asn160, Asn164, Asn169, Asn222, Asn309, Asn337, Asn340, and Asn511. Position 564 (His564) interacts with Zn(2+). Residue Glu565 is part of the active site. Residue His568 participates in Zn(2+) binding. Residues Asn589 and Asn608 are each glycosylated (N-linked (GlcNAc...) asparagine). Glu624 contributes to the Zn(2+) binding site. Asp628 acts as the Proton donor in catalysis. Asn656 carries N-linked (GlcNAc...) asparagine glycosylation.

It belongs to the peptidase M13 family. The cofactor is Zn(2+). Highly expressed in brain and midgut, and to a lesser extent in fat body, ovaries, testes and haemocytes.

The protein localises to the cell membrane. The polypeptide is Endothelin-converting enzyme homolog (Locusta migratoria (Migratory locust)).